A 106-amino-acid chain; its full sequence is ATP-dependent Clp protease adapter protein ClpS (106 aa).

It belongs to the ClpS family. In terms of assembly, binds to the N-terminal domain of the chaperone ClpA.

Involved in the modulation of the specificity of the ClpAP-mediated ATP-dependent protein degradation. In Methylococcus capsulatus (strain ATCC 33009 / NCIMB 11132 / Bath), this protein is ATP-dependent Clp protease adapter protein ClpS.